The sequence spans 198 residues: Ribonuclease HII (198 aa).

The RNase H type-2 domain occupies H10–S198. A divalent metal cation contacts are provided by D16, E17, and D108.

It belongs to the RNase HII family. It depends on Mn(2+) as a cofactor. Mg(2+) is required as a cofactor.

Its subcellular location is the cytoplasm. It catalyses the reaction Endonucleolytic cleavage to 5'-phosphomonoester.. Functionally, endonuclease that specifically degrades the RNA of RNA-DNA hybrids. The protein is Ribonuclease HII of Salmonella paratyphi A (strain AKU_12601).